The chain runs to 504 residues: ATP synthase subunit alpha (504 aa).

Position 171 to 178 (171 to 178 (GDRQTGKT)) interacts with ATP.

It belongs to the ATPase alpha/beta chains family. As to quaternary structure, F-type ATPases have 2 components, CF(1) - the catalytic core - and CF(0) - the membrane proton channel. CF(1) has five subunits: alpha(3), beta(3), gamma(1), delta(1), epsilon(1). CF(0) has three main subunits: a(1), b(2) and c(9-12). The alpha and beta chains form an alternating ring which encloses part of the gamma chain. CF(1) is attached to CF(0) by a central stalk formed by the gamma and epsilon chains, while a peripheral stalk is formed by the delta and b chains.

It localises to the cell inner membrane. The enzyme catalyses ATP + H2O + 4 H(+)(in) = ADP + phosphate + 5 H(+)(out). In terms of biological role, produces ATP from ADP in the presence of a proton gradient across the membrane. The alpha chain is a regulatory subunit. This Sulfurovum sp. (strain NBC37-1) protein is ATP synthase subunit alpha.